Here is a 102-residue protein sequence, read N- to C-terminus: Small ribosomal subunit protein uS10 (102 aa).

The protein belongs to the universal ribosomal protein uS10 family. Part of the 30S ribosomal subunit.

In terms of biological role, involved in the binding of tRNA to the ribosomes. This Staphylococcus haemolyticus (strain JCSC1435) protein is Small ribosomal subunit protein uS10.